We begin with the raw amino-acid sequence, 59 residues long: Potassium channel toxin alpha-KTx 15.5 (59 aa).

Residues 1 to 22 (MKFSSIILLTLLICSMSIFGNC) form the signal peptide. Q23 carries the post-translational modification Pyrrolidone carboxylic acid. 3 disulfide bridges follow: C30–C50, C35–C55, and C39–C57.

The protein belongs to the short scorpion toxin superfamily. Potassium channel inhibitor family. Alpha-KTx 15 subfamily. As to expression, expressed by the venom gland.

The protein resides in the secreted. Functionally, blocker of A-type voltage-gated potassium channels of cerebellar granular cells. May also inhibit Kv4/KCND when coexpressed with DPP6 or DPP10. The occlusion of the outer entry of the K(+) conducting pore is partially reversible and affects both open and closed channels. It shares the same target in rat brain than BmTX3 (AC Q8I0L5) and AmmTX3 (AC P60208). This chain is Potassium channel toxin alpha-KTx 15.5, found in Androctonus australis (Sahara scorpion).